The chain runs to 318 residues: Isoeugenol synthase 1 (318 aa).

Residues 10-13, 32-43, Arg33, 84-86, 109-111, Lys131, and 151-153 contribute to the NADP(+) site; these read TGYI, ARPLTPDSTPSS, VPM, SEF, and NCF. Lys131 serves as the catalytic Proton donor/acceptor. Pro260 serves as a coordination point for substrate.

The protein belongs to the NmrA-type oxidoreductase family. In terms of tissue distribution, mostly expressed in petals, and, to a lower extent, in sepals, stamens and pistils.

It catalyses the reaction (E)-isoeugenol + acetate + NADP(+) = (E)-coniferyl acetate + NADPH. The protein operates within aromatic compound metabolism; phenylpropanoid biosynthesis. Its function is as follows. Catalyzes the synthesis of the phenylpropene isoeugenol from coniferyl acetate. Phenylpropenes are the primary constituents of various essential plant oils. They are produced as antimicrobial and antianimal compounds, or as floral attractants of pollinators. Isoeugenol is a characteristic aromatic constituent of spices and a floral volatile compound. This is Isoeugenol synthase 1 from Clarkia breweri (Fairy fans).